The sequence spans 343 residues: Methionine import ATP-binding protein MetN 1 (343 aa).

The ABC transporter domain occupies 2-241 (IKLSNITKVF…PKTPLAQKFI (240 aa)). ATP is bound at residue 38-45 (GASGAGKS).

It belongs to the ABC transporter superfamily. Methionine importer (TC 3.A.1.24) family. In terms of assembly, the complex is composed of two ATP-binding proteins (MetN), two transmembrane proteins (MetI) and a solute-binding protein (MetQ).

It localises to the cell inner membrane. It carries out the reaction L-methionine(out) + ATP + H2O = L-methionine(in) + ADP + phosphate + H(+). The catalysed reaction is D-methionine(out) + ATP + H2O = D-methionine(in) + ADP + phosphate + H(+). Its function is as follows. Part of the ABC transporter complex MetNIQ involved in methionine import. Responsible for energy coupling to the transport system. This is Methionine import ATP-binding protein MetN 1 from Salmonella choleraesuis (strain SC-B67).